The chain runs to 252 residues: Triosephosphate isomerase (252 aa).

Residue 10-12 participates in substrate binding; that stretch reads NWK. Residue His96 is the Electrophile of the active site. Catalysis depends on Glu168, which acts as the Proton acceptor. Substrate contacts are provided by residues Gly174, Ser214, and 235–236; that span reads GG.

This sequence belongs to the triosephosphate isomerase family. Homodimer.

The protein resides in the cytoplasm. It carries out the reaction D-glyceraldehyde 3-phosphate = dihydroxyacetone phosphate. It participates in carbohydrate biosynthesis; gluconeogenesis. It functions in the pathway carbohydrate degradation; glycolysis; D-glyceraldehyde 3-phosphate from glycerone phosphate: step 1/1. Its function is as follows. Seems to be capable of enhancing bacteriocin synthesis. In terms of biological role, involved in the gluconeogenesis. Catalyzes stereospecifically the conversion of dihydroxyacetone phosphate (DHAP) to D-glyceraldehyde-3-phosphate (G3P). The chain is Triosephosphate isomerase from Lactobacillus delbrueckii subsp. lactis.